The chain runs to 353 residues: Photosystem II protein D1 (353 aa).

At Thr-2 the chain carries N-acetylthreonine. Phosphothreonine is present on Thr-2. Helical transmembrane passes span 29-46, 118-133, and 142-156; these read YIGWFGVLMIPTLLTATS, HFLLGVACYMGREWEL, and WIAVAYSAPVAAATA. Residue His-118 participates in chlorophyll a binding. Tyr-126 is a binding site for pheophytin a. [CaMn4O5] cluster is bound by residues Asp-170 and Glu-189. A helical membrane pass occupies residues 197–218; sequence FHMLGVAGVFGGSLFSAMHGSL. Position 198 (His-198) interacts with chlorophyll a. A quinone-binding positions include His-215 and 264-265; that span reads SF. Position 215 (His-215) interacts with Fe cation. A Fe cation-binding site is contributed by His-272. Residues 274 to 288 form a helical membrane-spanning segment; sequence LLAAWPVVGIWFTAL. 4 residues coordinate [CaMn4O5] cluster: His-332, Glu-333, Asp-342, and Ala-344. Positions 345–353 are excised as a propeptide; it reads AVEAPSTNG.

This sequence belongs to the reaction center PufL/M/PsbA/D family. As to quaternary structure, PSII is composed of 1 copy each of membrane proteins PsbA, PsbB, PsbC, PsbD, PsbE, PsbF, PsbH, PsbI, PsbJ, PsbK, PsbL, PsbM, PsbT, PsbX, PsbY, PsbZ, Psb30/Ycf12, at least 3 peripheral proteins of the oxygen-evolving complex and a large number of cofactors. It forms dimeric complexes. The D1/D2 heterodimer binds P680, chlorophylls that are the primary electron donor of PSII, and subsequent electron acceptors. It shares a non-heme iron and each subunit binds pheophytin, quinone, additional chlorophylls, carotenoids and lipids. D1 provides most of the ligands for the Mn4-Ca-O5 cluster of the oxygen-evolving complex (OEC). There is also a Cl(-1) ion associated with D1 and D2, which is required for oxygen evolution. The PSII complex binds additional chlorophylls, carotenoids and specific lipids. serves as cofactor. Tyr-161 forms a radical intermediate that is referred to as redox-active TyrZ, YZ or Y-Z. Post-translationally, C-terminally processed by CTPA; processing is essential to allow assembly of the oxygen-evolving complex and thus photosynthetic growth.

The protein localises to the plastid. The protein resides in the chloroplast thylakoid membrane. The catalysed reaction is 2 a plastoquinone + 4 hnu + 2 H2O = 2 a plastoquinol + O2. Photosystem II (PSII) is a light-driven water:plastoquinone oxidoreductase that uses light energy to abstract electrons from H(2)O, generating O(2) and a proton gradient subsequently used for ATP formation. It consists of a core antenna complex that captures photons, and an electron transfer chain that converts photonic excitation into a charge separation. The D1/D2 (PsbA/PsbD) reaction center heterodimer binds P680, the primary electron donor of PSII as well as several subsequent electron acceptors. The polypeptide is Photosystem II protein D1 (Dioscorea elephantipes (Elephant's foot yam)).